A 360-amino-acid chain; its full sequence is UDP-N-acetylglucosamine--N-acetylmuramyl-(pentapeptide) pyrophosphoryl-undecaprenol N-acetylglucosamine transferase (360 aa).

Positions 198 and 289 each coordinate UDP-N-acetyl-alpha-D-glucosamine.

Belongs to the glycosyltransferase 28 family. MurG subfamily.

It is found in the cell membrane. The catalysed reaction is Mur2Ac(oyl-L-Ala-gamma-D-Glu-L-Lys-D-Ala-D-Ala)-di-trans,octa-cis-undecaprenyl diphosphate + UDP-N-acetyl-alpha-D-glucosamine = beta-D-GlcNAc-(1-&gt;4)-Mur2Ac(oyl-L-Ala-gamma-D-Glu-L-Lys-D-Ala-D-Ala)-di-trans,octa-cis-undecaprenyl diphosphate + UDP + H(+). It functions in the pathway cell wall biogenesis; peptidoglycan biosynthesis. Functionally, cell wall formation. Catalyzes the transfer of a GlcNAc subunit on undecaprenyl-pyrophosphoryl-MurNAc-pentapeptide (lipid intermediate I) to form undecaprenyl-pyrophosphoryl-MurNAc-(pentapeptide)GlcNAc (lipid intermediate II). The protein is UDP-N-acetylglucosamine--N-acetylmuramyl-(pentapeptide) pyrophosphoryl-undecaprenol N-acetylglucosamine transferase of Streptococcus pyogenes serotype M18 (strain MGAS8232).